Reading from the N-terminus, the 114-residue chain is Cytochrome c2 (114 aa).

Gln1 carries the pyrrolidone carboxylic acid modification. Heme c contacts are provided by Cys13, Cys16, His17, and Met93.

This sequence belongs to the cytochrome c family. Post-translationally, binds 1 heme c group covalently per subunit.

It is found in the periplasm. Its function is as follows. Cytochrome c2 is found mainly in purple, non-sulfur, photosynthetic bacteria where it functions as the electron donor to the oxidized bacteriochlorophyll in the photophosphorylation pathway. However, it may also have a role in the respiratory chain and is found in some non-photosynthetic bacteria. The sequence is that of Cytochrome c2 from Rhodopseudomonas palustris.